The following is a 404-amino-acid chain: Probable tRNA sulfurtransferase (404 aa).

Positions Gln60–Thr165 constitute a THUMP domain. Residues Met183 to Leu184, His208 to Phe209, Arg265, Gly287, and Gln296 each bind ATP.

It belongs to the ThiI family.

Its subcellular location is the cytoplasm. It catalyses the reaction [ThiI sulfur-carrier protein]-S-sulfanyl-L-cysteine + a uridine in tRNA + 2 reduced [2Fe-2S]-[ferredoxin] + ATP + H(+) = [ThiI sulfur-carrier protein]-L-cysteine + a 4-thiouridine in tRNA + 2 oxidized [2Fe-2S]-[ferredoxin] + AMP + diphosphate. The enzyme catalyses [ThiS sulfur-carrier protein]-C-terminal Gly-Gly-AMP + S-sulfanyl-L-cysteinyl-[cysteine desulfurase] + AH2 = [ThiS sulfur-carrier protein]-C-terminal-Gly-aminoethanethioate + L-cysteinyl-[cysteine desulfurase] + A + AMP + 2 H(+). Its pathway is cofactor biosynthesis; thiamine diphosphate biosynthesis. In terms of biological role, catalyzes the ATP-dependent transfer of a sulfur to tRNA to produce 4-thiouridine in position 8 of tRNAs, which functions as a near-UV photosensor. Also catalyzes the transfer of sulfur to the sulfur carrier protein ThiS, forming ThiS-thiocarboxylate. This is a step in the synthesis of thiazole, in the thiamine biosynthesis pathway. The sulfur is donated as persulfide by IscS. The sequence is that of Probable tRNA sulfurtransferase from Streptococcus gordonii (strain Challis / ATCC 35105 / BCRC 15272 / CH1 / DL1 / V288).